A 132-amino-acid polypeptide reads, in one-letter code: ATP synthase epsilon chain, cyanelle (132 aa).

It belongs to the ATPase epsilon chain family. As to quaternary structure, F-type ATPases have 2 components, CF(1) - the catalytic core - and CF(0) - the membrane proton channel. CF(1) has five subunits: alpha(3), beta(3), gamma(1), delta(1), epsilon(1). CF(0) has three main subunits: a, b and c.

The protein localises to the plastid. The protein resides in the cyanelle thylakoid membrane. Its function is as follows. Produces ATP from ADP in the presence of a proton gradient across the membrane. The protein is ATP synthase epsilon chain, cyanelle of Cyanophora paradoxa.